Consider the following 156-residue polypeptide: uncharacterized protein (156 aa).

Positions 11–156 (EEFRSYLTYT…ETDVVMSKKL (146 aa)) constitute an N-acetyltransferase domain.

It belongs to the acetyltransferase family. In terms of assembly, homodimer.

This is an uncharacterized protein from Bacillus subtilis (strain 168).